We begin with the raw amino-acid sequence, 112 residues long: Citrate synthase (112 aa).

Residues histidine 39 and aspartate 97 contribute to the active site.

It belongs to the citrate synthase family.

The enzyme catalyses oxaloacetate + acetyl-CoA + H2O = citrate + CoA + H(+). Its pathway is carbohydrate metabolism; tricarboxylic acid cycle; isocitrate from oxaloacetate: step 1/2. This is Citrate synthase (gltA) from Bartonella vinsonii subsp. berkhoffii.